A 385-amino-acid polypeptide reads, in one-letter code: Cytochrome b (385 aa).

4 helical membrane passes run 32–52 (FGALAAFCLGIQIVTGIFLAM), 76–98 (WLIRYIHANGASFFFICVYIHVF), 113–133 (LWNLGVTILIVMILTAFLGYV), and 179–199 (FFSLHYLLPFVIALLSLIHVA). Heme b-binding residues include H82 and H96. Heme b is bound by residues H183 and H197. Residue H202 participates in a ubiquinone binding. A run of 4 helical transmembrane segments spans residues 226-246 (FIFKDLLGIIFFLIVFCYAVF), 290-310 (LGGVITLGLALIVLFLLPFIT), 322-342 (SKTILFWSFFSVCVLLGWIGF), and 349-369 (YLMLGQMLTVLYFFYFFSLAV).

It belongs to the cytochrome b family. The main subunits of complex b-c1 are: cytochrome b, cytochrome c1 and the Rieske protein. Heme b is required as a cofactor.

It localises to the mitochondrion inner membrane. Its function is as follows. Component of the ubiquinol-cytochrome c reductase complex (complex III or cytochrome b-c1 complex) that is part of the mitochondrial respiratory chain. The b-c1 complex mediates electron transfer from ubiquinol to cytochrome c. Contributes to the generation of a proton gradient across the mitochondrial membrane that is then used for ATP synthesis. The chain is Cytochrome b (MT-CYB) from Acanthamoeba castellanii (Amoeba).